A 252-amino-acid chain; its full sequence is 3-dehydroquinate dehydratase (252 aa).

3-dehydroquinate-binding positions include S21, 46–48 (EWR), and R82. H143 serves as the catalytic Proton donor/acceptor. The active-site Schiff-base intermediate with substrate is K170. Residues R213, S232, and Q236 each contribute to the 3-dehydroquinate site.

The protein belongs to the type-I 3-dehydroquinase family. In terms of assembly, homodimer.

The catalysed reaction is 3-dehydroquinate = 3-dehydroshikimate + H2O. The protein operates within metabolic intermediate biosynthesis; chorismate biosynthesis; chorismate from D-erythrose 4-phosphate and phosphoenolpyruvate: step 3/7. Functionally, involved in the third step of the chorismate pathway, which leads to the biosynthesis of aromatic amino acids. Catalyzes the cis-dehydration of 3-dehydroquinate (DHQ) and introduces the first double bond of the aromatic ring to yield 3-dehydroshikimate. This chain is 3-dehydroquinate dehydratase, found in Shigella dysenteriae serotype 1 (strain Sd197).